The primary structure comprises 380 residues: Tetraacyldisaccharide 4'-kinase (380 aa).

Residue 51–58 coordinates ATP; it reads SVGGTGKT.

It belongs to the LpxK family.

It carries out the reaction a lipid A disaccharide + ATP = a lipid IVA + ADP + H(+). It functions in the pathway glycolipid biosynthesis; lipid IV(A) biosynthesis; lipid IV(A) from (3R)-3-hydroxytetradecanoyl-[acyl-carrier-protein] and UDP-N-acetyl-alpha-D-glucosamine: step 6/6. Transfers the gamma-phosphate of ATP to the 4'-position of a tetraacyldisaccharide 1-phosphate intermediate (termed DS-1-P) to form tetraacyldisaccharide 1,4'-bis-phosphate (lipid IVA). In Bacteroides thetaiotaomicron (strain ATCC 29148 / DSM 2079 / JCM 5827 / CCUG 10774 / NCTC 10582 / VPI-5482 / E50), this protein is Tetraacyldisaccharide 4'-kinase.